Reading from the N-terminus, the 121-residue chain is MSFYESVFIIRQDVSLNDIDKIVDDFAKIIKDNNGTIIKKEYWGLRTLAYKIGNNKKGHYYFLGLDITGNVKEELERKMKLNENIIRFLTIQADSISSEPSPILKNQSTENAPVIDVTINN.

The protein belongs to the bacterial ribosomal protein bS6 family.

Its function is as follows. Binds together with bS18 to 16S ribosomal RNA. This chain is Small ribosomal subunit protein bS6, found in Rickettsia peacockii (strain Rustic).